The primary structure comprises 484 residues: Fumigaclavine B O-acetyltransferase ifgI (484 aa).

It belongs to the fumigaclavine B O-acetyltransferase family. In terms of assembly, monomer.

It carries out the reaction fumigaclavine B + acetyl-CoA = fumigaclavine A + CoA. It functions in the pathway alkaloid biosynthesis; ergot alkaloid biosynthesis. Fumigaclavine B O-acetyltransferase; part of the gene cluster that mediates the biosynthesis of isofumigaclavines, fungal ergot alkaloids. The tryptophan dimethylallyltransferase ifgA catalyzes the first step of ergot alkaloid biosynthesis by condensing dimethylallyl diphosphate (DMAP) and tryptophan to form 4-dimethylallyl-L-tryptophan. The second step is catalyzed by the methyltransferase ifgB that methylates 4-dimethylallyl-L-tryptophan in the presence of S-adenosyl-L-methionine, resulting in the formation of N-methyl-dimethylallyl-L-tryptophan. The catalase ifgD and the FAD-dependent oxidoreductase ifgC then transform N-methyl-dimethylallyl-L-tryptophan to chanoclavine-I which is further oxidized by ifgE in the presence of NAD(+), resulting in the formation of chanoclavine-I aldehyde. The chanoclavine-I aldehyde reductases ifgG and/or fgaOx3 reduce chanoclavine-I aldehyde to dihydrochanoclavine-I aldehyde that spontaneously dehydrates to form 6,8-dimethyl-6,7-didehydroergoline. The festuclavine dehydrogenases ifgF1 and/or ifgF2 then catalyze the reduction of 6,8-dimethyl-6,7-didehydroergoline to form festuclavine. Hydrolysis of festuclavine by a yet undetermined cytochrome P450 monooxygenase (called ifgH) then leads to the formation of isofumigaclavine B which is in turn acetylated by ifgI to isofumigaclavine A. Penicillium roqueforti has interestingly at least two sets of genes for the consumption of chanoclavine-I aldehyde on three different loci, the OYEs ifgG/fgaOx3 and the festuclavine synthase homologs ifgF1/ifgF2. The reason for the duplication of these genes is unclear, probably to ensure the conversion of chanoclavine-I aldehyde by differential gene expression under various environmental conditions. The chain is Fumigaclavine B O-acetyltransferase ifgI from Penicillium roqueforti (strain FM164).